The primary structure comprises 230 residues: Large ribosomal subunit protein uL1 (230 aa).

Belongs to the universal ribosomal protein uL1 family. Part of the 50S ribosomal subunit.

Functionally, binds directly to 23S rRNA. The L1 stalk is quite mobile in the ribosome, and is involved in E site tRNA release. Its function is as follows. Protein L1 is also a translational repressor protein, it controls the translation of the L11 operon by binding to its mRNA. This chain is Large ribosomal subunit protein uL1, found in Leuconostoc citreum (strain KM20).